Here is a 308-residue protein sequence, read N- to C-terminus: Hydroxyacylglutathione hydrolase, mitochondrial (308 aa).

The transit peptide at Met1–Leu13 directs the protein to the mitochondrion. Zn(2+) contacts are provided by His102, His104, Asp106, and His107. Lys116 bears the N6-acetyllysine mark. Residues His158 and Asp182 each contribute to the Zn(2+) site. Substrate is bound by residues Lys191–Tyr193 and His221–Tyr223. Zn(2+) is bound at residue His221. An N6-acetyllysine; alternate modification is found at Lys229. Lys229 carries the post-translational modification N6-succinyllysine; alternate. A substrate-binding site is contributed by Arg297–Lys300.

This sequence belongs to the metallo-beta-lactamase superfamily. Glyoxalase II family. As to quaternary structure, monomer. It depends on Zn(2+) as a cofactor. As to expression, testis.

The protein resides in the mitochondrion matrix. It is found in the cytoplasm. It catalyses the reaction an S-(2-hydroxyacyl)glutathione + H2O = a 2-hydroxy carboxylate + glutathione + H(+). It carries out the reaction (R)-S-lactoylglutathione + H2O = (R)-lactate + glutathione + H(+). It functions in the pathway secondary metabolite metabolism; methylglyoxal degradation; (R)-lactate from methylglyoxal: step 2/2. Functionally, thiolesterase that catalyzes the hydrolysis of S-D-lactoyl-glutathione to form glutathione and D-lactic acid. This is Hydroxyacylglutathione hydrolase, mitochondrial (HAGH) from Macaca fascicularis (Crab-eating macaque).